A 690-amino-acid polypeptide reads, in one-letter code: Amino-acid acetyltransferase, mitochondrial (690 aa).

The tract at residues 62-93 (RFPSVKKPKPPIPRQNQGAVETQSGKENEKPG) is disordered. A compositionally biased stretch (polar residues) spans 75–84 (RQNQGAVETQ). The N-acetyltransferase domain occupies 508 to 679 (DGHHLTLDDP…DYEAVCRSIQ (172 aa)).

The protein belongs to the acetyltransferase family.

The protein localises to the mitochondrion. It carries out the reaction L-glutamate + acetyl-CoA = N-acetyl-L-glutamate + CoA + H(+). The protein operates within amino-acid biosynthesis; L-arginine biosynthesis; N(2)-acetyl-L-ornithine from L-glutamate: step 1/4. In terms of biological role, N-acetylglutamate synthase involved in arginine biosynthesis. In Talaromyces stipitatus (strain ATCC 10500 / CBS 375.48 / QM 6759 / NRRL 1006) (Penicillium stipitatum), this protein is Amino-acid acetyltransferase, mitochondrial (arg2).